The following is a 253-amino-acid chain: Chitooligosaccharide deacetylase (253 aa).

The Mg(2+) site is built by H61 and H125.

Belongs to the YdjC deacetylase family. ChbG subfamily. Homodimer. Mg(2+) is required as a cofactor.

The protein localises to the cytoplasm. It carries out the reaction N,N'-diacetylchitobiose + H2O = N-acetyl-beta-D-glucosaminyl-(1-&gt;4)-D-glucosamine + acetate. The enzyme catalyses diacetylchitobiose-6'-phosphate + H2O = N'-monoacetylchitobiose-6'-phosphate + acetate. It participates in glycan degradation; chitin degradation. Involved in the degradation of chitin. ChbG is essential for growth on the acetylated chitooligosaccharides chitobiose and chitotriose but is dispensable for growth on cellobiose and chitosan dimer, the deacetylated form of chitobiose. Deacetylation of chitobiose-6-P and chitotriose-6-P is necessary for both the activation of the chb promoter by the regulatory protein ChbR and the hydrolysis of phosphorylated beta-glucosides by the phospho-beta-glucosidase ChbF. Catalyzes the removal of only one acetyl group from chitobiose-6-P to yield monoacetylchitobiose-6-P, the inducer of ChbR and the substrate of ChbF. This Proteus mirabilis (strain HI4320) protein is Chitooligosaccharide deacetylase.